We begin with the raw amino-acid sequence, 306 residues long: Recombination-associated protein RdgC (306 aa).

This sequence belongs to the RdgC family.

The protein resides in the cytoplasm. It localises to the nucleoid. Functionally, may be involved in recombination. In Pseudomonas syringae pv. tomato (strain ATCC BAA-871 / DC3000), this protein is Recombination-associated protein RdgC.